Here is a 306-residue protein sequence, read N- to C-terminus: Ribonuclease Z (306 aa).

Zn(2+) contacts are provided by histidine 63, histidine 65, aspartate 67, histidine 68, histidine 142, aspartate 213, and histidine 271. Catalysis depends on aspartate 67, which acts as the Proton acceptor.

The protein belongs to the RNase Z family. As to quaternary structure, homodimer. Zn(2+) serves as cofactor.

The enzyme catalyses Endonucleolytic cleavage of RNA, removing extra 3' nucleotides from tRNA precursor, generating 3' termini of tRNAs. A 3'-hydroxy group is left at the tRNA terminus and a 5'-phosphoryl group is left at the trailer molecule.. Its function is as follows. Zinc phosphodiesterase, which displays some tRNA 3'-processing endonuclease activity. Probably involved in tRNA maturation, by removing a 3'-trailer from precursor tRNA. This Oceanobacillus iheyensis (strain DSM 14371 / CIP 107618 / JCM 11309 / KCTC 3954 / HTE831) protein is Ribonuclease Z.